Reading from the N-terminus, the 137-residue chain is Large ribosomal subunit protein uL16 (137 aa).

This sequence belongs to the universal ribosomal protein uL16 family. Part of the 50S ribosomal subunit.

Binds 23S rRNA and is also seen to make contacts with the A and possibly P site tRNAs. The polypeptide is Large ribosomal subunit protein uL16 (Mycoplasma mycoides subsp. mycoides SC (strain CCUG 32753 / NCTC 10114 / PG1)).